A 93-amino-acid polypeptide reads, in one-letter code: Pyrimidine/purine nucleoside phosphorylase (93 aa).

It belongs to the nucleoside phosphorylase PpnP family.

The enzyme catalyses a purine D-ribonucleoside + phosphate = a purine nucleobase + alpha-D-ribose 1-phosphate. The catalysed reaction is adenosine + phosphate = alpha-D-ribose 1-phosphate + adenine. It carries out the reaction cytidine + phosphate = cytosine + alpha-D-ribose 1-phosphate. It catalyses the reaction guanosine + phosphate = alpha-D-ribose 1-phosphate + guanine. The enzyme catalyses inosine + phosphate = alpha-D-ribose 1-phosphate + hypoxanthine. The catalysed reaction is thymidine + phosphate = 2-deoxy-alpha-D-ribose 1-phosphate + thymine. It carries out the reaction uridine + phosphate = alpha-D-ribose 1-phosphate + uracil. It catalyses the reaction xanthosine + phosphate = alpha-D-ribose 1-phosphate + xanthine. Functionally, catalyzes the phosphorolysis of diverse nucleosides, yielding D-ribose 1-phosphate and the respective free bases. Can use uridine, adenosine, guanosine, cytidine, thymidine, inosine and xanthosine as substrates. Also catalyzes the reverse reactions. This Aliivibrio fischeri (strain ATCC 700601 / ES114) (Vibrio fischeri) protein is Pyrimidine/purine nucleoside phosphorylase.